The chain runs to 377 residues: Nitric oxide reductase FlRd-NAD(+) reductase (377 aa).

It belongs to the FAD-dependent oxidoreductase family. It depends on FAD as a cofactor.

Its subcellular location is the cytoplasm. The catalysed reaction is 2 reduced [nitric oxide reductase rubredoxin domain] + NAD(+) + H(+) = 2 oxidized [nitric oxide reductase rubredoxin domain] + NADH. Its pathway is nitrogen metabolism; nitric oxide reduction. Its function is as follows. One of at least two accessory proteins for anaerobic nitric oxide (NO) reductase. Reduces the rubredoxin moiety of NO reductase. The protein is Nitric oxide reductase FlRd-NAD(+) reductase of Escherichia coli O7:K1 (strain IAI39 / ExPEC).